The following is a 527-amino-acid chain: Pyruvate kinase 2, cytosolic (527 aa).

Arg58 contributes to the substrate binding site. 4 residues coordinate K(+): Asp60, Ser62, Asp92, and Thr93. 60-63 (DFSW) lines the ATP pocket. Position 256 (Lys256) interacts with substrate. Glu258 serves as a coordination point for Mg(2+). The substrate site is built by Gly281, Asn282, and Thr313. Asn282 serves as a coordination point for Mg(2+).

This sequence belongs to the pyruvate kinase family. In terms of assembly, homotetramer. The cofactor is Mg(2+). K(+) is required as a cofactor.

Its subcellular location is the cytoplasm. The protein resides in the cytosol. The catalysed reaction is pyruvate + ATP = phosphoenolpyruvate + ADP + H(+). Its pathway is carbohydrate degradation; glycolysis; pyruvate from D-glyceraldehyde 3-phosphate: step 5/5. Key regulatory enzyme of the glycolytic pathway that catalyzes the final step of glycolysis, converting ADP and phosphoenolpyruvate (PEP) to ATP and pyruvate by essentially irreversible transphosphorylation. This is Pyruvate kinase 2, cytosolic from Oryza sativa subsp. indica (Rice).